The primary structure comprises 154 residues: Nascent polypeptide-associated complex subunit beta (154 aa).

The region spanning 34–99 (EQDDTKLIEA…PQEKDVTQLI (66 aa)) is the NAC-A/B domain. A disordered region spans residues 125–154 (KNPELNAGGAEGAEEDIPDLIEGQKFDDVE).

It belongs to the NAC-beta family. Part of the nascent polypeptide-associated complex (NAC), consisting of EGD2 and EGD1. NAC associates with ribosomes via EGD1.

It is found in the cytoplasm. The protein resides in the nucleus. In terms of biological role, component of the nascent polypeptide-associated complex (NAC), a dynamic component of the ribosomal exit tunnel, protecting the emerging polypeptides from interaction with other cytoplasmic proteins to ensure appropriate nascent protein targeting. The NAC complex also promotes mitochondrial protein import by enhancing productive ribosome interactions with the outer mitochondrial membrane and blocks the inappropriate interaction of ribosomes translating non-secretory nascent polypeptides with translocation sites in the membrane of the endoplasmic reticulum. EGD1 may act as a transcription factor that exert a negative effect on the expression of several genes that are transcribed by RNA polymerase II. The chain is Nascent polypeptide-associated complex subunit beta (EGD1) from Debaryomyces hansenii (strain ATCC 36239 / CBS 767 / BCRC 21394 / JCM 1990 / NBRC 0083 / IGC 2968) (Yeast).